Here is a 505-residue protein sequence, read N- to C-terminus: Forkhead box protein O4 (505 aa).

Positions 1–10 (MDPGNENSAT) are enriched in polar residues. 2 disordered regions span residues 1 to 100 (MDPG…RRNA) and 176 to 246 (SWWM…CSRN). Thr-32 bears the Phosphothreonine; by PKB/AKT1 mark. A compositionally biased stretch (basic and acidic residues) spans 54–64 (LGEKVHTEGRS). The fork-head DNA-binding region spans 100–188 (AWGNQSYAEL…MLNPEGGKSG (89 aa)). Residue Ser-197 is modified to Phosphoserine; by PKB/AKT1. Basic residues predominate over residues 205–216 (LRGRSKAPKKKP). Ser-262 carries the post-translational modification Phosphoserine; by PKB/AKT1.

In terms of assembly, interacts with CREBBP/CBP, CTNNB1, MYOCD, SIRT1, SRF and YWHAZ. Acetylated by CREBBP/CBP and deacetylated by SIRT1. Binding of YWHAZ inhibits DNA-binding. Interacts with USP7; the interaction is enhanced in presence of hydrogen peroxide and occurs independently of TP53. Interacts with NLK, and this inhibits monoubiquitination and transcriptional activity. Interacts with FOXK1; the interaction inhibits MEF2C transactivation activity. Post-translationally, acetylation by CREBBP/CBP, which is induced by peroxidase stress, inhibits transcriptional activity. Deacetylation by SIRT1 is NAD-dependent and stimulates transcriptional activity. Phosphorylation by PKB/AKT1 inhibits transcriptional activity and is responsible for cytoplasmic localization. May be phosphorylated at multiple sites by NLK. In terms of processing, monoubiquitinated; monoubiquitination is induced by oxidative stress and reduced by deacetylase inhibitors; results in its relocalization to the nucleus and its increased transcriptional activity. Deubiquitinated by USP7; deubiquitination is induced by oxidative stress; enhances its interaction with USP7 and consequently, deubiquitination; increases its translocation to the cytoplasm and inhibits its transcriptional activity. Hydrogene-peroxide-induced ubiquitination and USP7-mediated deubiquitination have no major effect on its protein stability. In terms of tissue distribution, heart, brain, placenta, lung, liver, skeletal muscle, kidney and pancreas. Isoform zeta is most abundant in the liver, kidney, and pancreas.

It localises to the cytoplasm. The protein localises to the nucleus. In terms of biological role, transcription factor involved in the regulation of the insulin signaling pathway. Binds to insulin-response elements (IREs) and can activate transcription of IGFBP1. Down-regulates expression of HIF1A and suppresses hypoxia-induced transcriptional activation of HIF1A-modulated genes. Also involved in negative regulation of the cell cycle. Involved in increased proteasome activity in embryonic stem cells (ESCs) by activating expression of PSMD11 in ESCs, leading to enhanced assembly of the 26S proteasome, followed by higher proteasome activity. This chain is Forkhead box protein O4 (FOXO4), found in Homo sapiens (Human).